Reading from the N-terminus, the 443-residue chain is Xaa-Pro dipeptidase (443 aa).

Mn(2+)-binding residues include Asp246, Asp257, His339, Glu384, and Glu423.

It belongs to the peptidase M24B family. Bacterial-type prolidase subfamily. Mn(2+) is required as a cofactor.

The enzyme catalyses Xaa-L-Pro dipeptide + H2O = an L-alpha-amino acid + L-proline. Splits dipeptides with a prolyl residue in the C-terminal position. This is Xaa-Pro dipeptidase from Serratia proteamaculans (strain 568).